The sequence spans 129 residues: Small ribosomal subunit protein uS11 (129 aa).

Belongs to the universal ribosomal protein uS11 family. As to quaternary structure, part of the 30S ribosomal subunit. Interacts with proteins S7 and S18. Binds to IF-3.

Its function is as follows. Located on the platform of the 30S subunit, it bridges several disparate RNA helices of the 16S rRNA. Forms part of the Shine-Dalgarno cleft in the 70S ribosome. The protein is Small ribosomal subunit protein uS11 of Hyphomonas neptunium (strain ATCC 15444).